The sequence spans 241 residues: MATVSMRDMLKAGVHFGHQTRYWNPKMKPFIFGARNKVHIINLEKTVPMFNEALAELNKIASRKGKILFVGTKRAASEAVKDAALSCDQFFVNHRWLGGMLTNWKTVRQSIKRLKDLETQSQDGTFEKLTKKEALMRTRELEKLENSLGGIKDMGGLPDALFVIDADHEHIAIKEANNLGIPVFAIVDTNSDPDGVDFVIPGNDDAIRAVTLYLGAVAATVREGRSQDLASQAEESFVEAE.

This sequence belongs to the universal ribosomal protein uS2 family.

The sequence is that of Small ribosomal subunit protein uS2 from Escherichia coli (strain 55989 / EAEC).